We begin with the raw amino-acid sequence, 459 residues long: MNRLPSSASALACSAHALNLIEKRTLDHEEMKALNREVIEYFKEHVNPGFLEYRKSVTAGGDYGAVEWQAGGLNTLVDTQGQEFIDCLGGFGIFNVGHRNPVVVSAVQNQLAKQPLHSQELLDPLRAMLAKTLAALTPGKLKYSFFCNSGTESVEAALKLAKAYQSPRGKFTFIATSGAFHGKSLGALSATAKSTFRKPFMPLLPGFRHVPFGNIEAMLTALNECKKTGDDVAAVILEPIQGEGGVILPPPGYLTAVRKLCDEFGALMILDEVQTGMGRTGKMFACEHENVQPDILCLAKALGGGVMPIGATIATEEVFSVLFDNPFLHTTTFGGNPLACAAALATINVLLEQNLPAQAEQKGDMLLDGFRQLAREYPDLVQEARGKGMLMAIEFVDNEIGYNFASEMFRQRVLVAGTLNNAKTIRIEPPLTLTIEQCELVIKAARKALAAMRVSVEEA.

Pyridoxal 5'-phosphate is bound by residues 150-151 and glutamine 274; that span reads GT. Lysine 300 carries the N6-(pyridoxal phosphate)lysine modification. Threonine 332 is a pyridoxal 5'-phosphate binding site.

The protein belongs to the class-III pyridoxal-phosphate-dependent aminotransferase family. Putrescine aminotransferase subfamily. Pyridoxal 5'-phosphate serves as cofactor.

It catalyses the reaction an alkane-alpha,omega-diamine + 2-oxoglutarate = an omega-aminoaldehyde + L-glutamate. It carries out the reaction putrescine + 2-oxoglutarate = 1-pyrroline + L-glutamate + H2O. The enzyme catalyses cadaverine + 2-oxoglutarate = 5-aminopentanal + L-glutamate. The protein operates within amine and polyamine degradation; putrescine degradation; 4-aminobutanal from putrescine (transaminase route): step 1/1. In terms of biological role, catalyzes the aminotransferase reaction from putrescine to 2-oxoglutarate, leading to glutamate and 4-aminobutanal, which spontaneously cyclizes to form 1-pyrroline. This is the first step in one of two pathways for putrescine degradation, where putrescine is converted into 4-aminobutanoate (gamma-aminobutyrate or GABA) via 4-aminobutanal. Also functions as a cadaverine transaminase in a a L-lysine degradation pathway to succinate that proceeds via cadaverine, glutarate and L-2-hydroxyglutarate. In Escherichia coli O6:H1 (strain CFT073 / ATCC 700928 / UPEC), this protein is Putrescine aminotransferase.